Consider the following 216-residue polypeptide: Large ribosomal subunit protein bL25 (216 aa).

The disordered stretch occupies residues 184-216 (VPPTSDVEEEEGDEDLEEDVEETAAEEEEGVEE). Residues 189 to 216 (DVEEEEGDEDLEEDVEETAAEEEEGVEE) are compositionally biased toward acidic residues.

It belongs to the bacterial ribosomal protein bL25 family. CTC subfamily. In terms of assembly, part of the 50S ribosomal subunit; part of the 5S rRNA/L5/L18/L25 subcomplex. Contacts the 5S rRNA. Binds to the 5S rRNA independently of L5 and L18.

In terms of biological role, this is one of the proteins that binds to the 5S RNA in the ribosome where it forms part of the central protuberance. The protein is Large ribosomal subunit protein bL25 of Desulforapulum autotrophicum (strain ATCC 43914 / DSM 3382 / VKM B-1955 / HRM2) (Desulfobacterium autotrophicum).